A 907-amino-acid polypeptide reads, in one-letter code: Anaphase-promoting complex subunit 2 (907 aa).

Disordered regions lie at residues 203–228 (NNSKDLEFNDQQQEEEEEEEENEEES) and 790–838 (NKEK…AKEK). 2 stretches are compositionally biased toward acidic residues: residues 214-226 (QQEEEEEEEENEE) and 804-830 (ENDDQDESSSDDDDDDNNIVVEEEEEE).

This sequence belongs to the cullin family. The APC/C is composed of at least 13 subunits that stay tightly associated throughout the cell cycle: anapc1, anapc2, anapc3, anapc4, anapc5, anapc6, anapc7, anapc8, anapc10, anapc11, cdc20, cdc26 and cdh1.

The protein localises to the nucleus. Its pathway is protein modification; protein ubiquitination. Functionally, component of the anaphase promoting complex/cyclosome (APC/C), a cell cycle-regulated E3 ubiquitin-protein ligase complex that controls progression through mitosis and the G1 phase of the cell cycle. In Dictyostelium discoideum (Social amoeba), this protein is Anaphase-promoting complex subunit 2 (anapc2).